A 181-amino-acid chain; its full sequence is Germinal center-associated signaling and motility protein (181 aa).

Serine 102 carries the post-translational modification Phosphoserine. Residues 117-128 show a composition bias toward basic and acidic residues; the sequence is AERHKESSRGTE. The interval 117 to 181 is disordered; it reads AERHKESSRG…PYETHFSYPQ (65 aa). Tyrosine 150 carries the post-translational modification Phosphotyrosine.

As to quaternary structure, interacts with ACTB and MYH2; the interaction with MYH2 is increased by IL6-induced phosphorylation. Interacts (via C-terminus) with ARHGEF11 (via DH domain). Interacts with ARHGEF12. Interacts with SYK; the interaction increases after B-cell receptor stimulation, resulting in enhanced SYK autophosphorylation and activity. Phosphorylation on tyrosine residues can be induced by IL6. Phosphorylation is mediated by LYN. In terms of processing, targeted by the ubiquitin E3 ligase subunit FBXO10 to mediate its ubiquitination and degradation. As to expression, highly expressed in normal germinal center (GC) B-cells. Expressed in spleen and, to a lesser extent, bone marrow.

Its subcellular location is the cytoplasm. The protein resides in the cell membrane. Functionally, involved in the negative regulation of lymphocyte motility. It mediates the migration-inhibitory effects of IL6. Serves as a positive regulator of the RhoA signaling pathway. Enhancement of RhoA activation results in inhibition of lymphocyte and lymphoma cell motility by activation of its downstream effector ROCK. Is a regulator of B-cell receptor signaling, that acts through SYK kinase activation. This is Germinal center-associated signaling and motility protein (Gcsam) from Mus musculus (Mouse).